The following is a 362-amino-acid chain: Serine/threonine-protein kinase SRK2E (362 aa).

4 positions are modified to phosphoserine; by autocatalysis: S7, S18, S29, and S43. Residues 21 to 277 (YELVKDIGSG…IPEIRNHEWF (257 aa)) form the Protein kinase domain. Position 27–35 (27–35 (IGSGNFGVA)) interacts with ATP. K50 is a binding site for ATP. D140 serves as the catalytic Proton acceptor. The interval 160–186 (DFGYSKSSVLHSQPKSTVGTPAYIAPE) is activation loop. S175 carries the phosphoserine modification. Residues 283–318 (ADLMNDNTMTTQFDESDQPGQSIEEIMQIIAEATVP) form a domain I; osmotic stress response, required for the kinase activity region. The interval 319 to 362 (PAGTQNLNHYLTGSLDIDDDMEEDLESDLDDLDIDSSGEIVYAM) is domain II; ABA response and ABI1 binding.

It belongs to the protein kinase superfamily. Ser/Thr protein kinase family. Interacts with ABI1, PP2CA and SLAC1. Interacts with B'ALPHA, B'BETA, B'DELTA, PP2AA2, PP2AA3, PP2A1 and PP2A2. Associates with MAPKKK18 within the nucleus. Interacts with I-2, TOPP1 and TOPP2. Interacts with ABI2. In terms of processing, autophosphorylation on residues Ser-7, Ser-18, Ser-29, Ser-43, Ser-175 and/or Thr-176. Only the phosphorylation of Ser-175 is crucial for the kinase activity. The phosphorylation of Ser-43 may repress the ABA signaling pathway in absence of ABA. Expressed in seedlings, leaves, flowers, stems, and roots, but restricted to guard cells and vascular tissue.

Its subcellular location is the nucleus. It carries out the reaction L-seryl-[protein] + ATP = O-phospho-L-seryl-[protein] + ADP + H(+). It catalyses the reaction L-threonyl-[protein] + ATP = O-phospho-L-threonyl-[protein] + ADP + H(+). Kinase activity enhanced by ABA and low humidity. Repressed by PP2CA independently of its phosphatase activity. Probably inactivated by ABI1. Repressed by TOPP1. Negatively regulated by ABI2. In terms of biological role, activator of the abscisic acid (ABA) signaling pathway that regulates numerous ABA responses, such as stomata closure in response to drought, darkness, high CO(2), plant pathogens, or decreases in atmospheric relative humidity (RH). Involved in the resistance to drought by avoiding water loss. Required for the stomata closure mediated by pathogen-associated molecular pattern (PAMPs) (e.g. flg22 and LPS) of pathogenic bacteria such as P.syringae pv. tomato (Pst) and E.coli O157:H7. As a plant defense process, stomata are closed transiently in order to limit invaders, but actively reopened by bacteria after a few hours; virulent strains (e.g. Pst DC3000) are more efficient than avirulent strains (e.g. Pst DC3000 AvrRpt2) in reopening stomata. Mediates the phosphorylation and activation of the S-type anion efflux channel SLAC1, and thus promotes stomata closure. Essential for stomatal closure in response to reactive oxygen species (ROS). Promotes MAPKKK18 activity upon abscisic acid (ABA) treatment. In Arabidopsis thaliana (Mouse-ear cress), this protein is Serine/threonine-protein kinase SRK2E.